Here is a 299-residue protein sequence, read N- to C-terminus: UDP-3-O-acyl-N-acetylglucosamine deacetylase (299 aa).

Residues histidine 75, histidine 232, and aspartate 236 each coordinate Zn(2+). Histidine 259 functions as the Proton donor in the catalytic mechanism.

Belongs to the LpxC family. Zn(2+) serves as cofactor.

The enzyme catalyses a UDP-3-O-[(3R)-3-hydroxyacyl]-N-acetyl-alpha-D-glucosamine + H2O = a UDP-3-O-[(3R)-3-hydroxyacyl]-alpha-D-glucosamine + acetate. Its pathway is glycolipid biosynthesis; lipid IV(A) biosynthesis; lipid IV(A) from (3R)-3-hydroxytetradecanoyl-[acyl-carrier-protein] and UDP-N-acetyl-alpha-D-glucosamine: step 2/6. Functionally, catalyzes the hydrolysis of UDP-3-O-myristoyl-N-acetylglucosamine to form UDP-3-O-myristoylglucosamine and acetate, the committed step in lipid A biosynthesis. The sequence is that of UDP-3-O-acyl-N-acetylglucosamine deacetylase from Helicobacter hepaticus (strain ATCC 51449 / 3B1).